A 202-amino-acid chain; its full sequence is Dual-action ribosomal maturation protein DarP (202 aa).

Positions 1–13 (MPPMTRNTRNNPN) are enriched in low complexity. The segment at 1 to 39 (MPPMTRNTRNNPNGRFPGAFAPEDEDDLPKSKSQRKRDM) is disordered.

This sequence belongs to the DarP family.

Its subcellular location is the cytoplasm. Member of a network of 50S ribosomal subunit biogenesis factors which assembles along the 30S-50S interface, preventing incorrect 23S rRNA structures from forming. Promotes peptidyl transferase center (PTC) maturation. In Cupriavidus metallidurans (strain ATCC 43123 / DSM 2839 / NBRC 102507 / CH34) (Ralstonia metallidurans), this protein is Dual-action ribosomal maturation protein DarP.